The following is a 256-amino-acid chain: Glycerol-3-phosphate acyltransferase (256 aa).

The next 6 helical transmembrane spans lie at 2 to 22 (FPYL…SVLW), 58 to 78 (LAVA…AIGL), 90 to 110 (SYFI…WFKF), 123 to 143 (LIVV…IFAF), 153 to 173 (IIGT…GVMG), and 211 to 231 (FADG…ILVV).

Belongs to the PlsY family. In terms of assembly, probably interacts with PlsX.

The protein localises to the cell membrane. It carries out the reaction an acyl phosphate + sn-glycerol 3-phosphate = a 1-acyl-sn-glycero-3-phosphate + phosphate. It functions in the pathway lipid metabolism; phospholipid metabolism. Functionally, catalyzes the transfer of an acyl group from acyl-phosphate (acyl-PO(4)) to glycerol-3-phosphate (G3P) to form lysophosphatidic acid (LPA). This enzyme utilizes acyl-phosphate as fatty acyl donor, but not acyl-CoA or acyl-ACP. The polypeptide is Glycerol-3-phosphate acyltransferase (Mesoplasma florum (strain ATCC 33453 / NBRC 100688 / NCTC 11704 / L1) (Acholeplasma florum)).